A 97-amino-acid chain; its full sequence is Kunitz-type trypsin inhibitor 1 (97 aa).

This sequence belongs to the protease inhibitor I3 (leguminous Kunitz-type inhibitor) family.

In terms of biological role, exhibits Kunitz trypsin protease inhibitor activity. The protein is Kunitz-type trypsin inhibitor 1 of Selenicereus costaricensis (Red-fleshed dragon fruit).